Here is a 73-residue protein sequence, read N- to C-terminus: Translation initiation factor IF-1 (73 aa).

Positions 1 to 72 (MPKKDAIEVE…TRGRVTYRFK (72 aa)) constitute an S1-like domain.

It belongs to the IF-1 family. As to quaternary structure, component of the 30S ribosomal translation pre-initiation complex which assembles on the 30S ribosome in the order IF-2 and IF-3, IF-1 and N-formylmethionyl-tRNA(fMet); mRNA recruitment can occur at any time during PIC assembly.

It is found in the cytoplasm. Functionally, one of the essential components for the initiation of protein synthesis. Stabilizes the binding of IF-2 and IF-3 on the 30S subunit to which N-formylmethionyl-tRNA(fMet) subsequently binds. Helps modulate mRNA selection, yielding the 30S pre-initiation complex (PIC). Upon addition of the 50S ribosomal subunit IF-1, IF-2 and IF-3 are released leaving the mature 70S translation initiation complex. The protein is Translation initiation factor IF-1 of Dehalococcoides mccartyi (strain ATCC BAA-2266 / KCTC 15142 / 195) (Dehalococcoides ethenogenes (strain 195)).